The primary structure comprises 435 residues: Gamma-glutamyl phosphate reductase (435 aa).

Belongs to the gamma-glutamyl phosphate reductase family.

The protein resides in the cytoplasm. The catalysed reaction is L-glutamate 5-semialdehyde + phosphate + NADP(+) = L-glutamyl 5-phosphate + NADPH + H(+). It participates in amino-acid biosynthesis; L-proline biosynthesis; L-glutamate 5-semialdehyde from L-glutamate: step 2/2. Its function is as follows. Catalyzes the NADPH-dependent reduction of L-glutamate 5-phosphate into L-glutamate 5-semialdehyde and phosphate. The product spontaneously undergoes cyclization to form 1-pyrroline-5-carboxylate. This chain is Gamma-glutamyl phosphate reductase, found in Parasynechococcus marenigrum (strain WH8102).